Here is a 284-residue protein sequence, read N- to C-terminus: Pollen allergen Phl p 5b (284 aa).

The signal sequence occupies residues 1–19; the sequence is AAAAVPRRGPRGGPGRSYT. The segment at 1 to 21 is disordered; it reads AAAAVPRRGPRGGPGRSYTAD.

The protein belongs to the Poa p IX/Phl p VI allergen family. In terms of assembly, homodimer; disulfide-linked.

Its function is as follows. Has ribonuclease activity. May be involved in host-pathogen interactions. The polypeptide is Pollen allergen Phl p 5b (Phleum pratense (Common timothy)).